A 138-amino-acid chain; its full sequence is uncharacterized protein (138 aa).

3 helical membrane passes run 8-28 (LIIQ…AFLP), 47-67 (FIIC…TIIV), and 82-102 (TLPV…IAFI).

To U.parvum UU007, UU008 and UU041.

It is found in the cell membrane. This is an uncharacterized protein from Ureaplasma parvum serovar 3 (strain ATCC 700970).